Reading from the N-terminus, the 2395-residue chain is Helicase ssl-1 (2395 aa).

Residues 1 to 12 (MPATPVRASSTR) are compositionally biased toward low complexity. Residues 1–62 (MPATPVRASS…EKKKKKTSDD (62 aa)) form a disordered region. Residues 227–300 (LPKCVEPERN…IKEKRKMCAG (74 aa)) enclose the HSA domain. The segment covering 354-363 (LVSSSKSPSI) has biased composition (polar residues). Disordered stretches follow at residues 354–404 (LVSS…VRQE) and 444–504 (EKLE…HGVL). Basic and acidic residues-rich tracts occupy residues 365-375 (SDRDDKDEEFK), 394-404 (KSQKKEDVRQE), and 444-462 (EKLE…NEEK). Residues 388–464 (TIANAEKSQK…ACGDNEEKME (77 aa)) are a coiled coil. Polar residues predominate over residues 470-490 (SSDAQKPSTSSSDLTAEQLQD). One can recognise a Helicase ATP-binding domain in the interval 570-735 (VTLYEKNLNG…WSLMHFLMPT (166 aa)). ATP is bound at residue 583-590 (DEMGLGKT). The tract at residues 963-982 (AQPLQNGNSIPQNAPNRPQT) is disordered. The Helicase C-terminal domain maps to 1196–1342 (LLRQLYLYKH…ELAIDEAGFT (147 aa)). The stretch at 1452–1476 (KPEFEEECKEAEALIDQKREEWDKN) forms a coiled coil. Disordered stretches follow at residues 1615–1706 (ESAA…EEPD), 1977–2073 (SIQH…RRNA), 2092–2143 (QSGK…PQQR), 2276–2306 (QMRS…RPLV), and 2350–2395 (MQMP…PPQN). Low complexity-rich tracts occupy residues 1647-1669 (QQPT…QQQQ) and 1981-1995 (LQSS…QNLQ). Positions 1996–2019 (NSHNSEQRNNVQNMHQNQYNSSQN) are enriched in polar residues. Low complexity-rich tracts occupy residues 2051-2073 (LVQQ…RRNA) and 2092-2114 (QSGK…SSND). Positions 2115–2129 (GQGGASTVGGGGGGS) are enriched in gly residues. The span at 2130-2142 (QQPHQQQQQQPQQ) shows a compositional bias: low complexity. The segment covering 2281–2299 (NGGGVGGQGGLQGGPGGPQ) has biased composition (gly residues). Low complexity predominate over residues 2361–2377 (QQQAPPQSSQQASQQAP).

The protein belongs to the SNF2/RAD54 helicase family. SWR1 subfamily.

It is found in the nucleus. Functionally, probable catalytic component of a chromatin-remodeling complex which mediates the ATP-dependent exchange of histone H2A variant H2AV/htz-1 for H2A, leading to transcriptional regulation of selected genes by chromatin remodeling. Involved in foregut development, and may be involved in vulval development. The polypeptide is Helicase ssl-1 (ssl-1) (Caenorhabditis elegans).